The sequence spans 532 residues: Glutamate--cysteine ligase (532 aa).

The protein belongs to the glutamate--cysteine ligase type 1 family. Type 1 subfamily.

The catalysed reaction is L-cysteine + L-glutamate + ATP = gamma-L-glutamyl-L-cysteine + ADP + phosphate + H(+). Its pathway is sulfur metabolism; glutathione biosynthesis; glutathione from L-cysteine and L-glutamate: step 1/2. The protein is Glutamate--cysteine ligase of Pseudomonas fluorescens (strain ATCC BAA-477 / NRRL B-23932 / Pf-5).